We begin with the raw amino-acid sequence, 788 residues long: LPS-assembly protein LptD (788 aa).

Residues 1 to 24 (MKKRFPTLLATLIWTALYSQHTLA) form the signal peptide.

This sequence belongs to the LptD family. Component of the lipopolysaccharide transport and assembly complex. Interacts with LptE and LptA.

Its subcellular location is the cell outer membrane. Together with LptE, is involved in the assembly of lipopolysaccharide (LPS) at the surface of the outer membrane. In Yersinia enterocolitica serotype O:8 / biotype 1B (strain NCTC 13174 / 8081), this protein is LPS-assembly protein LptD.